Reading from the N-terminus, the 258-residue chain is NAD kinase (258 aa).

The active-site Proton acceptor is the Asp51. Residues Asp51–Gly52, Arg56, Asn119–Asp120, Lys130, Asp149, Thr160–Ser165, and Ala184 contribute to the NAD(+) site.

Belongs to the NAD kinase family. It depends on a divalent metal cation as a cofactor.

It is found in the cytoplasm. It carries out the reaction NAD(+) + ATP = ADP + NADP(+) + H(+). Its function is as follows. Involved in the regulation of the intracellular balance of NAD and NADP, and is a key enzyme in the biosynthesis of NADP. Catalyzes specifically the phosphorylation on 2'-hydroxyl of the adenosine moiety of NAD to yield NADP. The chain is NAD kinase from Thermotoga neapolitana (strain ATCC 49049 / DSM 4359 / NBRC 107923 / NS-E).